A 386-amino-acid chain; its full sequence is DNA replication and repair protein RecF (386 aa).

ATP is bound at residue 30-37; it reads GSNGFGKT.

It belongs to the RecF family.

It localises to the cytoplasm. The RecF protein is involved in DNA metabolism; it is required for DNA replication and normal SOS inducibility. RecF binds preferentially to single-stranded, linear DNA. It also seems to bind ATP. The polypeptide is DNA replication and repair protein RecF (Mycolicibacterium vanbaalenii (strain DSM 7251 / JCM 13017 / BCRC 16820 / KCTC 9966 / NRRL B-24157 / PYR-1) (Mycobacterium vanbaalenii)).